The sequence spans 650 residues: Probable ATP-dependent RNA helicase DDX17 (650 aa).

Residues 1-38 (MRGGGFGDRDRDRDRGGFGARGGSGLPPKKFGNPGERL) form a disordered region. Residues 7-16 (GDRDRDRDRG) are compositionally biased toward basic and acidic residues. N6-acetyllysine occurs at positions 29, 30, and 42. A Glycyl lysine isopeptide (Lys-Gly) (interchain with G-Cter in SUMO); alternate cross-link involves residue lysine 50. Residue lysine 50 forms a Glycyl lysine isopeptide (Lys-Gly) (interchain with G-Cter in SUMO1); alternate linkage. A Glycyl lysine isopeptide (Lys-Gly) (interchain with G-Cter in SUMO2); alternate cross-link involves residue lysine 50. Positions 92–120 (FAFHHANFPQYVMDVLMDQHFTEPTPIQC) match the Q motif motif. Residues 123 to 298 (FPLALSGRDM…EDFLRDYTQI (176 aa)) form the Helicase ATP-binding domain. ATP is bound at residue 136-143 (AQTGSGKT). A DEAD box motif is present at residues 246–249 (DEAD). One can recognise a Helicase C-terminal domain in the interval 326-473 (KLIQLMEEIM…AINPKLMQLV (148 aa)). Residue threonine 444 is modified to Phosphothreonine. Residue lysine 449 forms a Glycyl lysine isopeptide (Lys-Gly) (interchain with G-Cter in SUMO2) linkage. Residues 468-650 (KLMQLVDHRG…PPPPPPPSRK (183 aa)) are transactivation domain. Disordered regions lie at residues 472–543 (LVDH…YGSP) and 583–650 (ASST…PSRK). Positions 489 to 499 (RTTSSANNPNL) are enriched in polar residues. The segment covering 504–531 (ECDRRLRGVKDGGRRDSTSYRDRSETDR) has biased composition (basic and acidic residues). The span at 583-609 (ASSTASAGRSSQSSSQQFSGIGRSGQQ) shows a compositional bias: low complexity. Omega-N-methylarginine is present on arginine 605. Over residues 610–619 (PQPLMSQQFA) the composition is skewed to polar residues. A compositionally biased stretch (pro residues) spans 638–650 (YPPPPPPPPPSRK). The tract at residues 639–647 (PPPPPPPPP) is interaction with YAP1.

This sequence belongs to the DEAD box helicase family. DDX5/DBP2 subfamily. In terms of assembly, interacts with DDX5 in an RNA-independent manner. Interacts with CDK9 transcription elongation complex under basal conditions. Following cell stimulation with poly(I:C), a synthetic double-stranded RNA mimicking viral infection, the interaction with CDK9 is decreased. Interacts with ESR1 in an estrogen-independent manner. Interacts with HNRNPH1; this interaction is important for the regulation of alternative splicing on G-quadruplex structures. At high, but not low, cell density, interacts with DROSHA and DGCR8, the core components of the microprocessor complex involved in the maturation of primary microRNAs (pri-miRNAs) into pre-miRNAs. The interaction with DGCR8 is reduced during mitosis. At low, but not high, cell density, interacts with YAP1 and with its paralog, WWTR1/TAZ. Interactions with DROSHA and YAP1 are mutually exclusive. In vitro, the pre-miRNA processing activity of the DDX17-containing microprocessor complex is weaker than that of the DROSHA/DGCR8 microprocessor complex. Interacts with UPF3B. Interacts with NFAT5; this interaction leads to DDX17 recruitment to LNC2 and S100A4 promoters and NFAT5-mediated DDX17-enhanced transactivation. Interacts with HDAC1, HDAC2 and HDAC3; this interaction with HDAC1 and HDAC3, but not HDAC2, depends upon DDX17 acetylation. Interacts with ZC3HAV1 (via N-terminal domain) in an RNA-independent manner. Interacts with EXOSC3/RRP40 and EXOSC5/RRP46; this interaction may be indirect and mediated by ZC3HAV1-binding. Interacts with EP300; this interaction leads to acetylation at lysine residues. Interacts with CREBBP/CBP and KAT2B/P/CAF. Directly interacts with CTNNB1. Interacts with MYOD1. Interacts with TP53. Interacts with DCP1A in an RNA-independent manner. Interacts with DCP2 in an RNA-dependent manner. Interacts with DHX36; this interaction occurs in a RNA-dependent manner. Interacts with ERCC6. Post-translationally, sumoylation significantly increases stability. It also promotes interaction specifically with HDAC1 (but not HDAC2, nor HDAC3) and strongly stimulates ESR1 and TP53 coactivation. In terms of processing, acetylation at lysine residues stabilizes the protein, stimulates interaction with HDAC1 and HDAC3, but not HDAC2, and represses ESR1 and TP53 coactivation activity.

It is found in the nucleus. Its subcellular location is the nucleolus. The protein resides in the cytoplasm. The protein localises to the cytosol. The enzyme catalyses ATP + H2O = ADP + phosphate + H(+). Functionally, as an RNA helicase, unwinds RNA and alters RNA structures through ATP binding and hydrolysis. Involved in multiple cellular processes, including pre-mRNA splicing, alternative splicing, ribosomal RNA processing and miRNA processing, as well as transcription regulation. Regulates the alternative splicing of exons exhibiting specific features. This function requires the RNA helicase activity. Affects NFAT5 and histone macro-H2A.1/MACROH2A1 alternative splicing in a CDK9-dependent manner. Affects splicing of mediators of steroid hormone signaling pathway, including kinases that phosphorylates ESR1 and transcriptional regulators. By acting splicing of regulatory factors, participates in ESR1 and AR stabilization. Promotes the inclusion of specific AC-rich alternative exons in CD44 transcripts. In myoblasts and epithelial cells, cooperates with HNRNPH1 to control the splicing of specific subsets of exons. In addition to binding mature mRNAs, also interacts with certain pri-microRNAs, including MIR132/miR-132, and stabilizes the primary transcript. Also participates in the MIR132 processing, resulting in significantly higher levels of mature MIR132 than MIR212 despite the fact that both are cotranscribed and co-regulated. Binding of pri-microRNAs may occur on the 3' segment flanking the stem loop via the 5'-[ACG]CAUC[ACU]-3' consensus sequence. Participates in MYC down-regulation at high cell density through the production of MYC-targeting microRNAs. Along with DDX5, may be involved in the processing of the 32S intermediate into the mature 28S rRNA. Promoter-specific transcription regulator, functioning as a coactivator or corepressor depending on the context of the promoter and the transcriptional complex in which it exists. Enhances NFAT5 transcriptional activity. Synergizes with TP53 in the activation of the MDM2 promoter; this activity requires acetylation on lysine residues. May also coactivate MDM2 transcription through a TP53-independent pathway. Coactivates MMP7 transcription. Along with CTNNB1, coactivates MYC, JUN, FOSL1 and cyclin D1/CCND1 transcription. Alone or in combination with DDX5 and/or SRA1 non-coding RNA, plays a critical role in promoting the assembly of proteins required for the formation of the transcription initiation complex and chromatin remodeling leading to coactivation of MYOD1-dependent transcription. This helicase-independent activity is required for skeletal muscle cells to properly differentiate into myotubes. During epithelial-to-mesenchymal transition, coregulates SMAD-dependent transcriptional activity, directly controlling key effectors of differentiation, including miRNAs which in turn directly repress its expression. Plays a role in estrogen and testosterone signaling pathway at several levels. Mediates the use of alternative promoters in estrogen-responsive genes and regulates transcription and splicing of a large number of steroid hormone target genes. Contrary to the splicing regulation activity, transcriptional coregulation of the estrogen receptor ESR1 is helicase activity-independent. Plays a role in innate immunity. Specifically restricts bunyavirus infection, including Rift Valley fever virus (RVFV) or La Crosse virus (LACV), but not vesicular stomatitis virus (VSV), in an interferon- and DROSHA-independent manner. Binds to RVFV RNA, likely via structured viral RNA elements. Promotes mRNA degradation mediated by the antiviral zinc-finger protein ZC3HAV1, in an ATPase-dependent manner. The sequence is that of Probable ATP-dependent RNA helicase DDX17 (Ddx17) from Mus musculus (Mouse).